The chain runs to 136 residues: Large-conductance mechanosensitive channel (136 aa).

2 consecutive transmembrane segments (helical) span residues 10–30 (FAMR…AAFG) and 76–96 (GAFI…FIAI).

It belongs to the MscL family. As to quaternary structure, homopentamer.

The protein resides in the cell inner membrane. Functionally, channel that opens in response to stretch forces in the membrane lipid bilayer. May participate in the regulation of osmotic pressure changes within the cell. The protein is Large-conductance mechanosensitive channel of Pectobacterium atrosepticum (strain SCRI 1043 / ATCC BAA-672) (Erwinia carotovora subsp. atroseptica).